The following is a 100-amino-acid chain: Defensin-like protein 316 (100 aa).

An N-terminal signal peptide occupies residues 1 to 18; the sequence is MASHIICYIFCIIKLSCA. 3 disulfides stabilise this stretch: cysteine 21–cysteine 84, cysteine 43–cysteine 64, and cysteine 53–cysteine 76.

The protein belongs to the DEFL family.

It localises to the secreted. In Arabidopsis thaliana (Mouse-ear cress), this protein is Defensin-like protein 316.